We begin with the raw amino-acid sequence, 329 residues long: Interleukin-12 subunit beta (329 aa).

The N-terminal stretch at 1-22 is a signal peptide; it reads MHPQQLVIAWLSLVLLAPPLMA. An Ig-like C2-type domain is found at 23-106; it reads IWELEKNVYV…LSHSFLLIHK (84 aa). Residues Cys-50 and Cys-90 are joined by a disulfide bond. N-linked (GlcNAc...) asparagine glycosylation is found at Asn-135 and Asn-223. A Fibronectin type-III domain is found at 238-329; the sequence is PPKNLQLKPL…WSNWASVSCS (92 aa).

The protein belongs to the IL-12B family. Heterodimer with IL12A; disulfide-linked. The heterodimer is known as interleukin IL-12. Heterodimer with IL23A; disulfide-linked. The heterodimer is known as interleukin IL-23. Also secreted as a monomer. Interacts with NBR1; this interaction promotes IL-12 secretion.

The protein resides in the secreted. Functionally, cytokine that can act as a growth factor for activated T and NK cells, enhance the lytic activity of NK/lymphokine-activated killer cells, and stimulate the production of IFN-gamma by resting PBMC. Associates with IL23A to form the IL-23 interleukin, a heterodimeric cytokine which functions in innate and adaptive immunity. IL-23 may constitute with IL-17 an acute response to infection in peripheral tissues. IL-23 binds to a heterodimeric receptor complex composed of IL12RB1 and IL23R, activates the Jak-Stat signaling cascade, stimulates memory rather than naive T-cells and promotes production of pro-inflammatory cytokines. IL-23 induces autoimmune inflammation and thus may be responsible for autoimmune inflammatory diseases and may be important for tumorigenesis. The sequence is that of Interleukin-12 subunit beta (IL12B) from Felis catus (Cat).